A 141-amino-acid polypeptide reads, in one-letter code: ATP synthase epsilon chain (141 aa).

The protein belongs to the ATPase epsilon chain family. F-type ATPases have 2 components, CF(1) - the catalytic core - and CF(0) - the membrane proton channel. CF(1) has five subunits: alpha(3), beta(3), gamma(1), delta(1), epsilon(1). CF(0) has three main subunits: a, b and c.

Its subcellular location is the cell inner membrane. In terms of biological role, produces ATP from ADP in the presence of a proton gradient across the membrane. The chain is ATP synthase epsilon chain from Paraburkholderia phytofirmans (strain DSM 17436 / LMG 22146 / PsJN) (Burkholderia phytofirmans).